The sequence spans 1157 residues: Voltage-dependent calcium channel subunit alpha-2/delta-2 (1157 aa).

The N-terminal stretch at 1-18 (MAVPARTCGASWPGPVRT) is a signal peptide. The segment at 1 to 37 (MAVPARTCGASWPGPVRTARPWPGRGPRPCPDPRGPA) is disordered. Topologically, residues 19–1119 (ARPWPGRGPR…TEDTSDCGRG (1101 aa)) are extracellular. A compositionally biased stretch (pro residues) spans 24–34 (GRGPRPCPDPR). Residue Asn205 is glycosylated (N-linked (GlcNAc...) asparagine). Residues 294-472 (DMVIIVDVSG…INTQEYLDVL (179 aa)) form the VWFA domain. 3 residues coordinate a divalent metal cation: Asp300, Ser302, and Ser304. An MIDAS-like motif motif is present at residues 300–304 (DVSGS). Asn389, Asn421, Asn510, Asn543, Asn627, and Asn864 each carry an N-linked (GlcNAc...) asparagine glycan. A disulfide bridge links Cys446 with Cys1104. In terms of domain architecture, Cache spans 488–577 (WTNVYEDALG…KPQITNFREP (90 aa)). Residues 1120–1140 (ASFPPSLGVLVSLQLLLLLGL) traverse the membrane as a helical segment. At 1141 to 1157 (PPRPQPQIHSFTPSRRL) the chain is on the cytoplasmic side.

The protein belongs to the calcium channel subunit alpha-2/delta family. In terms of assembly, dimer formed of alpha-2-2 and delta-2 chains; disulfide-linked. Voltage-dependent calcium channels are multisubunit complexes, consisting of alpha-1 (CACNA1), alpha-2 (CACNA2D), beta (CACNB) and delta (CACNA2D) subunits in a 1:1:1:1 ratio. N-glycosylated. In terms of processing, may be proteolytically processed into subunits alpha-2-2 and delta-2 that are disulfide-linked. It is however unclear whether such cleavage really takes place in vivo and has a functional role. In terms of tissue distribution, in heart, it is highly expressed in atrium and at lower level in ventricle.

The protein resides in the membrane. Its function is as follows. The alpha-2/delta subunit of voltage-dependent calcium channels regulates calcium current density and activation/inactivation kinetics of the calcium channel. Acts as a regulatory subunit for P/Q-type calcium channel (CACNA1A), N-type (CACNA1B), L-type (CACNA1C OR CACNA1D) and possibly T-type (CACNA1G). Overexpression induces apoptosis. The sequence is that of Voltage-dependent calcium channel subunit alpha-2/delta-2 (Cacna2d2) from Rattus norvegicus (Rat).